We begin with the raw amino-acid sequence, 242 residues long: Type III pantothenate kinase (242 aa).

ATP is bound at residue 7–14 (DLGNSRFK). Residues Tyr91 and 98–101 (GVDR) contribute to the substrate site. The active-site Proton acceptor is Asp100. Position 121 (Thr121) interacts with ATP. Residue Thr171 coordinates substrate.

It belongs to the type III pantothenate kinase family. In terms of assembly, homodimer. NH4(+) serves as cofactor. The cofactor is K(+).

The protein localises to the cytoplasm. It carries out the reaction (R)-pantothenate + ATP = (R)-4'-phosphopantothenate + ADP + H(+). Its pathway is cofactor biosynthesis; coenzyme A biosynthesis; CoA from (R)-pantothenate: step 1/5. Catalyzes the phosphorylation of pantothenate (Pan), the first step in CoA biosynthesis. In Xanthomonas oryzae pv. oryzae (strain MAFF 311018), this protein is Type III pantothenate kinase.